The primary structure comprises 59 residues: Single-pass membrane and coiled-coil domain-containing protein 4 (59 aa).

The interval 1 to 25 (MRQLRGKPKKETSKDKKERKQAMQE) is disordered. Residues 9 to 22 (KKETSKDKKERKQA) show a composition bias toward basic and acidic residues. Residues 9-31 (KKETSKDKKERKQAMQEARQQIT) adopt a coiled-coil conformation. Residues 32–52 (TVVLPTLAVVVLLIVVFVYVA) form a helical membrane-spanning segment.

Belongs to the SMCO4 family.

Its subcellular location is the membrane. This chain is Single-pass membrane and coiled-coil domain-containing protein 4 (smco4), found in Taeniopygia guttata (Zebra finch).